Consider the following 272-residue polypeptide: Insulin-like growth factor-binding protein 1 (272 aa).

A signal peptide spans 1–25; sequence MPEFLTVVSWPFLILLSFQVRVVAG. In terms of domain architecture, IGFBP N-terminal spans 28–109; that stretch reads QPWHCAPCTA…TRGQGACVLE (82 aa). Intrachain disulfides connect Cys-32/Cys-59, Cys-35/Cys-61, Cys-43/Cys-62, Cys-50/Cys-65, Cys-73/Cys-86, and Cys-80/Cys-106. The tract at residues 115–143 is disordered; the sequence is TSSLSGSQHEEAKAAVASEDELAESPEMT. Acidic residues predominate over residues 132-143; that stretch reads SEDELAESPEMT. Residues Ser-139, Ser-157, and Ser-169 each carry the phosphoserine modification. The residue at position 170 (Thr-170) is a Phosphothreonine. Tyr-171 carries the post-translational modification Phosphotyrosine. The region spanning 186–264 is the Thyroglobulin type-1 domain; the sequence is KEPCQRELYK…SLETRGDPNC (79 aa). 3 disulfides stabilise this stretch: Cys-189-Cys-219, Cys-230-Cys-241, and Cys-243-Cys-264. Residue Ser-255 is modified to Phosphoserine. Residues 259–261 carry the Cell attachment site motif; it reads RGD.

In terms of assembly, binds equally well IGF1 and IGF2. Interacts with integrin ITGA5:ITGB1. Interacts with VHL; this interaction inhibits HIF1A degradation.

The protein localises to the secreted. Functionally, multifunctional protein that plays a critical role in regulating the availability of IGFs such as IGF1 and IGF2 to their receptors and thereby regulates IGF-mediated cellular processes including cell migration, proliferation, differentiation or apoptosis in a cell-type specific manner. Also plays a positive role in cell migration by interacting with integrin ITGA5:ITGB1 through its RGD motif. Mechanistically, binding to integrins leads to activation of focal adhesion kinase/PTK2 and stimulation of the mitogen-activated protein kinase (MAPK) pathway. Regulates cardiomyocyte apoptosis by suppressing HIF-1alpha/HIF1A ubiquitination and subsequent degradation. The protein is Insulin-like growth factor-binding protein 1 (Igfbp1) of Rattus norvegicus (Rat).